We begin with the raw amino-acid sequence, 692 residues long: Glycine--tRNA ligase beta subunit (692 aa).

The protein belongs to the class-II aminoacyl-tRNA synthetase family. Tetramer of two alpha and two beta subunits.

The protein localises to the cytoplasm. It catalyses the reaction tRNA(Gly) + glycine + ATP = glycyl-tRNA(Gly) + AMP + diphosphate. In Pseudoalteromonas atlantica (strain T6c / ATCC BAA-1087), this protein is Glycine--tRNA ligase beta subunit.